A 507-amino-acid chain; its full sequence is MVTIRADEISNIIRERIEQYNREVTIVNTGTVLQVGDGIARIYGLDEVMAGELVEFEEGTIGIALNLESNNVGVVLMGDGLMIQEGSSVKATGKIAQIPVSEAYLGRVINALANPIDGRGKISASESRLIESPAPGIISRRSVYEPLQTGLIAIDSMIPIGRGQRELIIGDRQTGKTAVATDTILNQQGQNVICVYVAIGQKASSVAQVVTSLQERGAMEYTIVVAETADSPATLQYLAPYTGAALAEYFMYREQHTLIIYDDLSKQAQAYRQMSLLLRRPPGREAYPGDVFYLHSRLLERAAKLSSQLGEGSMTALPIVETQSGDVSAYIPTNVISITDGQIFLSADLFNAGIRPAINVGISVSRVGSAAQIKAMKQVAGKLKLELAQFAELEAFSQFSSDLDKATQNQLARGQRLRELLKQSQSAPLTVEEQIMTIYTGTNGYLDGLEIGQVRKFLVQLRTYLKTNKPQFQEIISSTKTLTAEAESFLKEGIQEQLERFLLLEKL.

170 to 177 (GDRQTGKT) is an ATP binding site. Thr-257 carries the post-translational modification Phosphothreonine.

Belongs to the ATPase alpha/beta chains family. As to quaternary structure, F-type ATPases have 2 components, CF(1) - the catalytic core - and CF(0) - the membrane proton channel. CF(1) has five subunits: alpha(3), beta(3), gamma(1), delta(1), epsilon(1). CF(0) has four main subunits: a, b, b' and c.

It localises to the plastid. The protein resides in the chloroplast thylakoid membrane. It carries out the reaction ATP + H2O + 4 H(+)(in) = ADP + phosphate + 5 H(+)(out). In terms of biological role, produces ATP from ADP in the presence of a proton gradient across the membrane. The alpha chain is a regulatory subunit. The chain is ATP synthase subunit alpha, chloroplastic from Draba nemorosa (Woodland whitlowgrass).